Here is a 342-residue protein sequence, read N- to C-terminus: Glucokinase (342 aa).

ATP is bound at residue 7-12; that stretch reads GDIGGT.

Belongs to the bacterial glucokinase family.

It localises to the cytoplasm. The catalysed reaction is D-glucose + ATP = D-glucose 6-phosphate + ADP + H(+). In Trichormus variabilis (strain ATCC 29413 / PCC 7937) (Anabaena variabilis), this protein is Glucokinase.